We begin with the raw amino-acid sequence, 466 residues long: Glycine--tRNA ligase (466 aa).

Residues R104 and E178 each coordinate substrate. Residues 210–212 (RNE), 220–225 (FRTREF), 294–295 (EL), and 338–341 (GADR) each bind ATP. A substrate-binding site is contributed by 225–229 (FEQME). A substrate-binding site is contributed by 334 to 338 (EPSLG).

Belongs to the class-II aminoacyl-tRNA synthetase family. Homodimer.

It is found in the cytoplasm. It catalyses the reaction tRNA(Gly) + glycine + ATP = glycyl-tRNA(Gly) + AMP + diphosphate. Catalyzes the attachment of glycine to tRNA(Gly). This is Glycine--tRNA ligase from Geobacillus thermodenitrificans (strain NG80-2).